The following is a 243-amino-acid chain: Ribosomal RNA small subunit methyltransferase G (243 aa).

S-adenosyl-L-methionine is bound by residues Gly97, Leu102, 148-149 (VE), and Arg161.

The protein belongs to the methyltransferase superfamily. RNA methyltransferase RsmG family.

The protein localises to the cytoplasm. It carries out the reaction guanosine(527) in 16S rRNA + S-adenosyl-L-methionine = N(7)-methylguanosine(527) in 16S rRNA + S-adenosyl-L-homocysteine. Functionally, specifically methylates the N7 position of guanine in position 527 of 16S rRNA. This is Ribosomal RNA small subunit methyltransferase G from Paracidovorax citrulli (strain AAC00-1) (Acidovorax citrulli).